The primary structure comprises 1102 residues: Ubiquitin carboxyl-terminal hydrolase 7 (1102 aa).

A compositionally biased stretch (low complexity) spans 1 to 10 (MNHQQQQQQQ). Positions 1–38 (MNHQQQQQQQKAGEQQLSEPEDMEMEAGDTDDPPRITQ) are disordered. Residues 1–208 (MNHQQQQQQQ…APHGVAWDSK (208 aa)) form an interaction with TSPYL5 region. Serine 18 carries the post-translational modification Phosphoserine. The span at 19–31 (EPEDMEMEAGDTD) shows a compositional bias: acidic residues. Serine 49 bears the Phosphoserine mark. Residues 53-208 (NTAEEDMEDD…APHGVAWDSK (156 aa)) are interaction with p53/TP53, MDM2 and EBNA1. The region spanning 68–195 (EATFQFTVER…DDKVTFEVFV (128 aa)) is the MATH domain. Residues 70 to 205 (TFQFTVERFS…QADAPHGVAW (136 aa)) form a necessary for nuclear localization region. The region spanning 214–521 (VGLKNQGATC…NAYMLVYIRE (308 aa)) is the USP domain. Cysteine 223 serves as the catalytic Nucleophile. The Proton acceptor role is filled by histidine 464. The segment at 622-801 (LWPMQARSNG…HRVDVIFCDK (180 aa)) is interaction with ICP0/VMW110. Lysine 869 carries the post-translational modification N6-acetyllysine; alternate. Lysine 869 participates in a covalent cross-link: Glycyl lysine isopeptide (Lys-Gly) (interchain with G-Cter in SUMO2); alternate. Lysine 869 is covalently cross-linked (Glycyl lysine isopeptide (Lys-Gly) (interchain with G-Cter in ubiquitin); alternate). A Glycyl lysine isopeptide (Lys-Gly) (interchain with G-Cter in SUMO2) cross-link involves residue lysine 882. Serine 963 bears the Phosphoserine mark. Lysine 1084 and lysine 1096 each carry N6-acetyllysine.

The protein belongs to the peptidase C19 family. As to quaternary structure, monomer. Homodimer. Part of a complex with DAXX, MDM2, RASSF1 and USP7. Part of a complex with DAXX, MDM2 and USP7. Interacts with MDM2; the interaction is independent of p53/TP53. Interacts with DAXX; the interaction is direct and independent of MDM2 and p53/TP53. Component of a complex composed of KMT2E/MLL5 (isoform 3), OGT (isoform 1) and USP7; the complex stabilizes KMT2E/MLL5, preventing KMT2E/MLL5 ubiquitination and proteasomal-mediated degradation. Interacts (via MATH domain) with KMT2E/MLL5 isoform 3. Interacts with OGT isoform 1. Interacts with FOXO4; the interaction is enhanced in presence of hydrogen peroxide and occurs independently of p53/TP53. Interacts with p53/TP53; the interaction is enhanced in response to DNA damage. Interacts with TSPYL5; this impairs interaction with p53/TP53. Interacts with PTEN; the interaction is direct. Interacts with ATXN1 and the strength of interaction is influenced by the length of the poly-Gln region in ATXN1. A weaker interaction seen with mutants having longer poly-Gln regions. Interacts with KIAA1530/UVSSA. Interacts with ABRAXAS2; the interaction is direct. Identified in a complex with TP53/p53 and ABRAXAS2. Interacts with MEX3C and antagonizes its ability to degrade mRNA. Interacts with DNMT1 and UHRF1. Interacts with FOXP3. Interacts (via MATH domain) with RNF220. Associated component of the Polycomb group (PcG) multiprotein PRC1-like complex. Interacts with EPOP. Interacts with OTUD4 and USP9X; the interaction is direct. Interacts with CRY2. Interacts with REST. Interacts with ERCC6. Part of a complex consisting of USP7, MAGEL2 and TRIM27; directly interacts with MAGEL2; directly interacts with TRIM27. (Microbial infection) Isoform 1 and isoform 2 interact with herpesvirus 1 trans-acting transcriptional protein ICP0/VMW110. Binding to ICP0/VMW110 may modulate the substrate specificity or activity of USP7 to stabilize viral proteins. In terms of assembly, (Microbial infection) Interacts with Epstein-Barr virus EBNA1; the interaction is independent and simultaneous to EBNA1 interaction with USP7 as well as necessary for PML nuclear bodies disruption by EBNA1. EBNA1, USP7 and CSNK2B form a ternary complex. EBNA1 shows a 10-fold higher affinity than p53/TP53 and can compete with it for USP7 binding. As to quaternary structure, (Microbial infection) Interacts with human cytomegalovirus proteins UL35 and UL35A; these interactions inhibit the ability of USP7 to form nuclear bodies. (Microbial infection) Interacts with herpes virus 8/HHV-8 proteins vIRF-1 and vIRF-3; these interactions may disrupt TP53 signaling pathway during viral infection by decreasing the availability of USP7 for deubiquitinating and stabilizing TP53. In terms of assembly, (Microbial infection) Interacts with herpes virus 8/HHV-8 protein vIRF-2; this interaction modulates antiviral signaling via disruption of USP7 interactions with innate immune signaling proteins TRAF3 and TRAF6 thus affecting their ubiquitination. Post-translationally, isoform 1: Phosphorylated. Isoform 1 is phosphorylated at positions Ser-18 and Ser-963. Isoform 2: Not phosphorylated. Isoform 1: Polyneddylated. Isoform 2: Not Polyneddylated. In terms of processing, isoform 1 and isoform 2: Not sumoylated. Post-translationally, isoform 1 and isoform 2: Polyubiquitinated by herpesvirus 1 trans-acting transcriptional protein ICP0/VMW110; leading to its subsequent proteasomal degradation. Isoform 1: Ubiquitinated at Lys-869. Expressed in neural progenitor cells (at protein level). Widely expressed. Overexpressed in prostate cancer.

It is found in the nucleus. It localises to the cytoplasm. The protein localises to the PML body. Its subcellular location is the chromosome. It catalyses the reaction Thiol-dependent hydrolysis of ester, thioester, amide, peptide and isopeptide bonds formed by the C-terminal Gly of ubiquitin (a 76-residue protein attached to proteins as an intracellular targeting signal).. Its activity is regulated as follows. Inhibited by N-ethyl-maleimide (NEM) and divalent cations. Tolerates high concentrations of NaCl but is inhibited at concentrations of 195 mM and higher. In terms of biological role, hydrolase that deubiquitinates target proteins such as ARMC5, FOXO4, DEPTOR, KAT5, p53/TP53, MDM2, ERCC6, DNMT1, UHRF1, PTEN, KMT2E/MLL5 and DAXX. Together with DAXX, prevents MDM2 self-ubiquitination and enhances the E3 ligase activity of MDM2 towards p53/TP53, thereby promoting p53/TP53 ubiquitination and proteasomal degradation. Deubiquitinates p53/TP53, preventing degradation of p53/TP53, and enhances p53/TP53-dependent transcription regulation, cell growth repression and apoptosis. Deubiquitinates p53/TP53 and MDM2 and strongly stabilizes p53/TP53 even in the presence of excess MDM2, and also induces p53/TP53-dependent cell growth repression and apoptosis. Deubiquitination of FOXO4 in presence of hydrogen peroxide is not dependent on p53/TP53 and inhibits FOXO4-induced transcriptional activity. In association with DAXX, is involved in the deubiquitination and translocation of PTEN from the nucleus to the cytoplasm, both processes that are counteracted by PML. Deubiquitinates KMT2E/MLL5 preventing KMT2E/MLL5 proteasomal-mediated degradation. Involved in cell proliferation during early embryonic development. Involved in transcription-coupled nucleotide excision repair (TC-NER) in response to UV damage: recruited to DNA damage sites following interaction with KIAA1530/UVSSA and promotes deubiquitination of ERCC6, preventing UV-induced degradation of ERCC6. Involved in maintenance of DNA methylation via its interaction with UHRF1 and DNMT1: acts by mediating deubiquitination of UHRF1 and DNMT1, preventing their degradation and promoting DNA methylation by DNMT1. Deubiquitinates alkylation repair enzyme ALKBH3. OTUD4 recruits USP7 and USP9X to stabilize ALKBH3, thereby promoting the repair of alkylated DNA lesions. Acts as a chromatin regulator via its association with the Polycomb group (PcG) multiprotein PRC1-like complex; may act by deubiquitinating components of the PRC1-like complex. Able to mediate deubiquitination of histone H2B; it is however unsure whether this activity takes place in vivo. Exhibits a preference towards 'Lys-48'-linked ubiquitin chains. Increases regulatory T-cells (Treg) suppressive capacity by deubiquitinating and stabilizing the transcription factor FOXP3 which is crucial for Treg cell function. Plays a role in the maintenance of the circadian clock periodicity via deubiquitination and stabilization of the CRY1 and CRY2 proteins. Deubiquitinates REST, thereby stabilizing REST and promoting the maintenance of neural progenitor cells. Deubiquitinates SIRT7, inhibiting SIRT7 histone deacetylase activity and regulating gluconeogenesis. Involved in the regulation of WASH-dependent actin polymerization at the surface of endosomes and the regulation of endosomal protein recycling. It maintains optimal WASH complex activity and precise F-actin levels via deubiquitination of TRIM27 and WASHC1. Mediates the deubiquitination of phosphorylated DEPTOR, promoting its stability and leading to decreased mTORC1 signaling. Functionally, (Microbial infection) Contributes to the overall stabilization and trans-activation capability of the herpesvirus 1 trans-acting transcriptional protein ICP0/VMW110 during HSV-1 infection. Its function is as follows. (Microbial infection) Upon infection with Epstein-Barr virus, the interaction with viral EBNA1 increases the association of USP7 with PML proteins, which is required for the polyubiquitylation and degradation of PML. In Homo sapiens (Human), this protein is Ubiquitin carboxyl-terminal hydrolase 7.